The following is a 262-amino-acid chain: MSQHQARKRFGQHFLTDESVIDAIVRAIAPARDDAIVEIGPGLSALTAPLIARLNRLSVVEIDRDLAARLRKKYPPEQLSVVEADALTVDFRQFGAGMRVVGNLPYNISSPLLFHLMGAADLVRDQHFMLQREVIDRMVAEPRSADYGRLSVMLQSRYRMEKLFDVPPEAFDPPPRVVSAVVRMVPLGPDRPQPASEAAFEAVVARAFSQRRKMLRRGLGDWAAHVPWDDIGVPPTARAEEVGVAQFIRLTDALLAAGVIKA.

Residues histidine 13, leucine 15, glycine 40, glutamate 61, aspartate 85, and asparagine 103 each contribute to the S-adenosyl-L-methionine site.

This sequence belongs to the class I-like SAM-binding methyltransferase superfamily. rRNA adenine N(6)-methyltransferase family. RsmA subfamily.

The protein resides in the cytoplasm. It carries out the reaction adenosine(1518)/adenosine(1519) in 16S rRNA + 4 S-adenosyl-L-methionine = N(6)-dimethyladenosine(1518)/N(6)-dimethyladenosine(1519) in 16S rRNA + 4 S-adenosyl-L-homocysteine + 4 H(+). In terms of biological role, specifically dimethylates two adjacent adenosines (A1518 and A1519) in the loop of a conserved hairpin near the 3'-end of 16S rRNA in the 30S particle. May play a critical role in biogenesis of 30S subunits. In Bordetella avium (strain 197N), this protein is Ribosomal RNA small subunit methyltransferase A.